Here is a 489-residue protein sequence, read N- to C-terminus: 3-octaprenyl-4-hydroxybenzoate carboxy-lyase (489 aa).

Mn(2+) is bound at residue Asn172. Prenylated FMN is bound by residues 175–177 (IYR), 189–191 (RWL), and 194–195 (RG). Glu238 serves as a coordination point for Mn(2+). Asp287 functions as the Proton donor in the catalytic mechanism.

This sequence belongs to the UbiD family. In terms of assembly, homohexamer. Prenylated FMN is required as a cofactor. The cofactor is Mn(2+).

Its subcellular location is the cell membrane. The catalysed reaction is a 4-hydroxy-3-(all-trans-polyprenyl)benzoate + H(+) = a 2-(all-trans-polyprenyl)phenol + CO2. It functions in the pathway cofactor biosynthesis; ubiquinone biosynthesis. Its function is as follows. Catalyzes the decarboxylation of 3-octaprenyl-4-hydroxy benzoate to 2-octaprenylphenol, an intermediate step in ubiquinone biosynthesis. The polypeptide is 3-octaprenyl-4-hydroxybenzoate carboxy-lyase (Aeromonas salmonicida (strain A449)).